The chain runs to 372 residues: NAD(P)H-quinone oxidoreductase subunit 1 (372 aa).

8 helical membrane passes run 27 to 47 (IIWLPLPMLLVLVSAVVGVLV), 97 to 117 (ILFTAGPILVLVPVILSWLIV), 128 to 148 (VGIGIFLWIALSSIQPIGLLM), 176 to 196 (LALSVLAIVLMTNSLSTIDIV), 204 to 224 (ILSWNIWRQPVGFIIFWICAL), 266 to 286 (ILSALLVSILYLGGWGFPIPV), 308 to 328 (SIGIIMTVLKAYLLVFVAILL), and 347 to 367 (FLLPISLANLLVTAGLKLAFP).

The protein belongs to the complex I subunit 1 family. NDH-1 is composed of at least 11 different subunits.

It localises to the cellular thylakoid membrane. It catalyses the reaction a plastoquinone + NADH + (n+1) H(+)(in) = a plastoquinol + NAD(+) + n H(+)(out). The enzyme catalyses a plastoquinone + NADPH + (n+1) H(+)(in) = a plastoquinol + NADP(+) + n H(+)(out). In terms of biological role, NDH-1 shuttles electrons from an unknown electron donor, via FMN and iron-sulfur (Fe-S) centers, to quinones in the respiratory and/or the photosynthetic chain. The immediate electron acceptor for the enzyme in this species is believed to be plastoquinone. Couples the redox reaction to proton translocation, and thus conserves the redox energy in a proton gradient. The polypeptide is NAD(P)H-quinone oxidoreductase subunit 1 (Prochlorococcus marinus subsp. pastoris (strain CCMP1986 / NIES-2087 / MED4)).